Consider the following 427-residue polypeptide: Indole diterpene prenyltransferase penD (427 aa).

77–78 (YV) provides a ligand contact to L-tryptophan. Substrate-binding residues include Arg99, Lys186, Tyr188, Arg259, Lys261, Tyr263, Tyr344, Tyr409, and Tyr413.

Belongs to the tryptophan dimethylallyltransferase family.

The protein operates within secondary metabolite biosynthesis. Its function is as follows. Indole diterpene prenyltransferase; part of the gene cluster that mediates the biosynthesis of the indole diterpenes penitrems. The geranylgeranyl diphosphate (GGPP) synthase penG catalyzes the first step in penitrem biosynthesis via conversion of farnesyl pyrophosphate and isopentyl pyrophosphate into geranylgeranyl pyrophosphate (GGPP). Condensation of indole-3-glycerol phosphate with GGPP by the prenyl transferase penC then forms 3-geranylgeranylindole (3-GGI). Epoxidation by the FAD-dependent monooxygenase penM leads to a epoxidized-GGI that is substrate of the terpene cyclase penB for cyclization to yield paspaline. Paspaline is subsequently converted to 13-desoxypaxilline by the cytochrome P450 monooxygenase penP, the latter being then converted to paxilline by the cytochrome P450 monooxygenase penQ. Paxilline is converted to beta-paxitriol via C-10 ketoreduction by the short-chain dehydrogenase PC-15 which can be monoprenylated at the C-20 by the indole diterpene prenyltransferase penD. A two-step elimination (acetylation and elimination) process performed by the O-acetyltransferase PC-16 and the P.simplicissimum ptmI-ortholog not yet identified in P.crustosum, leads to the production of the prenylated form of penijanthine. The FAD-linked oxidoreductase ptmO then converts the prenylated form of penijanthine into PC-M5 which is in turn transformed into PC-M4 by the aromatic dimethylallyltransferase PC-22. A series of oxidation steps involving 4 cytochrome P450 monooxygenases (PC-21, PC-05, PC-23, PC-20) and a FAD-dependent monooxygenase (PC-14) are required for the transformation of PC-M4 to penitrems A and E. Synthesis of these final products is proposed to proceed via penitrems D and C (PC-21, PC-05, PC-14) and penitrems B and F (PC-21, PC-05, PC-14, PC-23). The sequence is that of Indole diterpene prenyltransferase penD from Penicillium crustosum (Blue mold fungus).